The sequence spans 351 residues: uncharacterized protein (351 aa).

Residues Asp-215, Asp-226, His-290, Glu-319, and Glu-333 each contribute to the Mn(2+) site.

This sequence belongs to the peptidase M24B family. Mn(2+) serves as cofactor.

This is an uncharacterized protein from Staphylococcus epidermidis (strain ATCC 35984 / DSM 28319 / BCRC 17069 / CCUG 31568 / BM 3577 / RP62A).